The primary structure comprises 747 residues: Myotubularin-related protein 12 (747 aa).

One can recognise a Myotubularin phosphatase domain in the interval Phe-205–Tyr-643. The segment at Val-449–Lys-558 is interaction with MTM1. The tract at residues Asp-548–Lys-575 is disordered. Polar residues predominate over residues Gln-562–Ser-572. Residues Ser-564 and Ser-601 each carry the phosphoserine modification.

Belongs to the protein-tyrosine phosphatase family. Non-receptor class myotubularin subfamily. In terms of assembly, heterodimer with lipid phosphatase MTM1. Heterodimer with lipid phosphatase MTMR2. As to expression, expressed in skeletal muscles (at protein level).

The protein resides in the cytoplasm. It is found in the sarcoplasmic reticulum. The protein localises to the myofibril. Its subcellular location is the sarcomere. Acts as an adapter for the myotubularin-related phosphatases. Regulates phosphatase MTM1 protein stability and possibly its intracellular location. By stabilizing MTM1 protein levels, required for skeletal muscle maintenance but not for myogenesis. This is Myotubularin-related protein 12 (Mtmr12) from Mus musculus (Mouse).